The following is a 400-amino-acid chain: MSIIKKIVFKRFNSTLKKTALHDLHVSLGGTMVPYAGYSMPVLYKGQTHIESHNWTRTNAGLFDVSHMLQSKLSGPHSVKFLQRVTPTDFNALPVGSGTLSVLLNPQGGVVDDTIITKENDDNEFYIVTNAGCAERDTEFFHDELQNGSTLDCQWKIIEGRSLLALQGPKAKDVLEPLLSKTAPGKDLKELFFGQRHEFALKDGSLVQIARGGYTGEDGFEISIANEKAVEFAEQLLANPVMKPIGLAARDSLRLEAGMCLYGHELDESITPVEAALNWVISKSRRDLVDQKYWFNGYAKIMDQLNNKTYSKVRVGFKYLKKGPAARNGVKIFLPDAETEVGLVTSGSASPTLNNINIGQAYVQKGYHKKGTKLLVQVRNKFYPIELAKMPLVPTHYYKQ.

Positions 221, 250, and 397 each coordinate substrate.

It belongs to the GcvT family. In terms of assembly, component of the glycine decarboxylase complex (GDC), which is composed of four proteins: P, T, L and H.

The protein localises to the mitochondrion. The enzyme catalyses N(6)-[(R)-S(8)-aminomethyldihydrolipoyl]-L-lysyl-[protein] + (6S)-5,6,7,8-tetrahydrofolate = N(6)-[(R)-dihydrolipoyl]-L-lysyl-[protein] + (6R)-5,10-methylene-5,6,7,8-tetrahydrofolate + NH4(+). Functionally, the glycine cleavage system (glycine decarboxylase complex) catalyzes the degradation of glycine. The sequence is that of Aminomethyltransferase, mitochondrial (GCV1) from Saccharomyces cerevisiae (strain ATCC 204508 / S288c) (Baker's yeast).